A 1589-amino-acid polypeptide reads, in one-letter code: Mediator of RNA polymerase II transcription subunit 23 (1589 aa).

Positions 1381 to 1499 (YVSQNEPAPP…PPTPAPMHHQ (119 aa)) are disordered. Residues 1392–1410 (TPEREKTPERKDQQKEQQE) show a composition bias toward basic and acidic residues. Residues 1457–1470 (LHHQQQQQQHLSQM) are compositionally biased toward low complexity.

It belongs to the Mediator complex subunit 23 family. As to quaternary structure, component of the Mediator complex.

The protein localises to the nucleus. Its function is as follows. Component of the Mediator complex, a coactivator involved in the regulated transcription of nearly all RNA polymerase II-dependent genes. Mediator functions as a bridge to convey information from gene-specific regulatory proteins to the basal RNA polymerase II transcription machinery. Mediator is recruited to promoters by direct interactions with regulatory proteins and serves as a scaffold for the assembly of a functional preinitiation complex with RNA polymerase II and the general transcription factors. This Caenorhabditis briggsae protein is Mediator of RNA polymerase II transcription subunit 23 (sur-2).